We begin with the raw amino-acid sequence, 274 residues long: Penicillin-insensitive murein endopeptidase (274 aa).

An N-terminal signal peptide occupies residues 1–19 (MNKTAIALLALLASSASLA). 3 disulfide bridges follow: Cys44/Cys265, Cys187/Cys235, and Cys216/Cys223. Zn(2+)-binding residues include His110, His113, Asp120, Asp147, His150, and His211. A disordered region spans residues 227 to 274 (PLPPPGDGCGAELQSWFEPPKPGTTKPEKKTPPPLPPSCQALLDEHVI).

It belongs to the peptidase M74 family. In terms of assembly, dimer. Zn(2+) is required as a cofactor.

The protein localises to the periplasm. Functionally, murein endopeptidase that cleaves the D-alanyl-meso-2,6-diamino-pimelyl amide bond that connects peptidoglycan strands. Likely plays a role in the removal of murein from the sacculus. The protein is Penicillin-insensitive murein endopeptidase of Escherichia coli O1:K1 / APEC.